The chain runs to 497 residues: MSHSKQSGTEAGSIPRVLISADRSSSGKTTISMGLMAALVSRGYKVQPFKVALDYIDPSYHTEITGRFCRNLDGYLMDENGILDVYSHACETGSGADIAIIEGVRGLYEGFEGLSDLGSTAQIAKILKCPVVFVINARSITRSAAALISGYKNFDPDVEIAGVILNNIGGRRHAQKAKEAIEHYTGVPVIGIIPRDPSMQISMRHLGLMPALEGRRRLGDGGFEDRLRGIEEIINKGIDVDRFLEIAGSAKSLTSPENSIFSPAAGAGSPRPRIGIALDEAFNFYYRDNIDLLELAGAEIVYFSPVNDPELPDVDGLYIGGGYPELFAAELEANESMRRSIKEASAAGMPIYAECGGLMYLTEKISTGVPGKGTYHDASMPESTYIMVGALPGHTIMGQTRVVSYNIGTLDRDCLIGKEGNSFKGHEFHHSEIREIPEYAEFAIALLRGTGIKGDRDGLIVGNTLGSYAHLHGVAYRELAGSLVEAAGKFRASRAPR.

The GATase cobBQ-type domain maps to 273–478 (RIGIALDEAF…AHLHGVAYRE (206 aa)). Catalysis depends on cysteine 355, which acts as the Nucleophile.

This sequence belongs to the CobB/CbiA family. Mg(2+) serves as cofactor.

The catalysed reaction is cob(II)yrinate + 2 L-glutamine + 2 ATP + 2 H2O = cob(II)yrinate a,c diamide + 2 L-glutamate + 2 ADP + 2 phosphate + 2 H(+). The enzyme catalyses Ni-sirohydrochlorin + 2 L-glutamine + 2 ATP + 2 H2O = Ni-sirohydrochlorin a,c-diamide + 2 L-glutamate + 2 ADP + 2 phosphate + 2 H(+). The protein operates within cofactor biosynthesis; adenosylcobalamin biosynthesis; cob(II)yrinate a,c-diamide from sirohydrochlorin (anaerobic route): step 10/10. In terms of biological role, catalyzes the ATP-dependent amidation of the two carboxylate groups at positions a and c of cobyrinate, using either L-glutamine or ammonia as the nitrogen source (Potential). Involved in the biosynthesis of the unique nickel-containing tetrapyrrole coenzyme F430, the prosthetic group of methyl-coenzyme M reductase (MCR), which plays a key role in methanogenesis and anaerobic methane oxidation. Catalyzes the ATP-dependent amidation of the two carboxylate groups at positions a and c of Ni-sirohydrochlorin, using L-glutamine or ammonia as the nitrogen source. In Methanosarcina acetivorans (strain ATCC 35395 / DSM 2834 / JCM 12185 / C2A), this protein is Cobyrinate a,c-diamide synthase.